Consider the following 101-residue polypeptide: MLSLAHFLVLGAILFAISIVGIFLNRKNVIVLLMAIELMLLAVNMNFVAFSHYMGDLAGQVFVFFILTVAAAESAIGLAILVVLFRNLDTINVDDMDTLKY.

3 consecutive transmembrane segments (helical) span residues 4–24 (LAHFLVLGAILFAISIVGIFL), 30–50 (IVLLMAIELMLLAVNMNFVAF), and 61–81 (VFVFFILTVAAAESAIGLAIL).

This sequence belongs to the complex I subunit 4L family. NDH-1 is composed of 14 different subunits. Subunits NuoA, H, J, K, L, M, N constitute the membrane sector of the complex.

It is found in the cell inner membrane. It catalyses the reaction a quinone + NADH + 5 H(+)(in) = a quinol + NAD(+) + 4 H(+)(out). NDH-1 shuttles electrons from NADH, via FMN and iron-sulfur (Fe-S) centers, to quinones in the respiratory chain. The immediate electron acceptor for the enzyme in this species is believed to be ubiquinone. Couples the redox reaction to proton translocation (for every two electrons transferred, four hydrogen ions are translocated across the cytoplasmic membrane), and thus conserves the redox energy in a proton gradient. This chain is NADH-quinone oxidoreductase subunit K, found in Cupriavidus pinatubonensis (strain JMP 134 / LMG 1197) (Cupriavidus necator (strain JMP 134)).